We begin with the raw amino-acid sequence, 335 residues long: MSHAGAIVGLGVALIAAALFSAIHKIEEGHVGVYYRGGALLSTTSGPGFHLMFPFITSFKSVQSTLQTDEIKNVPCGTSGGVMIYFDRIEVVNYLISSAVYDIVKNFTADYDKALIFNKIHHELNQFCSVHNLQEVYIELFDQIDENLKLALQEDLNLMAPGIIIQAVRVTKPKIPEAIGRNFELMEGEKTKLLIAAQKQKVVEKEAETERKKAIIEAEKVAQVAQIKYKQKVMEKETEKKISEIEDFAFVAREKARADAEYYTAHKVAEANRLKLTPEYLQLVKYQAIAANSKIYFGQDIPNMFMDSSAGPRVQSATVFQDDSLGLDEAASAEE.

The Cytoplasmic segment spans residues 1–2; that stretch reads MS. Residues 3–23 traverse the membrane as a helical segment; it reads HAGAIVGLGVALIAAALFSAI. Residues 24 to 335 lie on the Lumenal side of the membrane; sequence HKIEEGHVGV…GLDEAASAEE (312 aa). A glycan (N-linked (GlcNAc...) asparagine) is linked at asparagine 106.

This sequence belongs to the band 7/mec-2 family.

It localises to the endoplasmic reticulum membrane. Mediates the endoplasmic reticulum-associated degradation (ERAD) of inositol 1,4,5-trisphosphate receptors (IP3Rs). Promotes sterol-accelerated ERAD of HMGCR. Involved in regulation of cellular cholesterol homeostasis by regulation the SREBP signaling pathway. In Xenopus laevis (African clawed frog), this protein is Erlin-2-A (erlin2-a).